The primary structure comprises 551 residues: E3 ubiquitin-protein ligase TRIM8 (551 aa).

The RING-type zinc finger occupies cysteine 15–asparagine 56. B box-type zinc fingers lie at residues cysteine 92 to histidine 132 and valine 140 to valine 182. Positions aspartate 181–glutamine 249 form a coiled coil.

It belongs to the TRIM/RBCC family. Homodimer. Interacts with SOCS1 (via) SH2 domain and SOCS box. Interacts with HSP90AB1; prevents nucleus translocation of phosphorylated STAT3 and HSP90AB1. Interacts with MAP3K7/TAK1. Interacts with PIAS3. Interacts with TICAM1. Interacts with TRIM15; this interaction prevents TRIM8 cytoplasmic translocation. Widely expressed. Expressed in glomerular podocytes of kidneys.

It localises to the cytoplasm. The protein resides in the nucleus. It is found in the nuclear body. It carries out the reaction S-ubiquitinyl-[E2 ubiquitin-conjugating enzyme]-L-cysteine + [acceptor protein]-L-lysine = [E2 ubiquitin-conjugating enzyme]-L-cysteine + N(6)-ubiquitinyl-[acceptor protein]-L-lysine.. It participates in protein modification; protein ubiquitination. Functionally, E3 ubiquitin-protein ligase that participates in multiple biological processes including cell survival, differentiation, apoptosis, and in particular, the innate immune response. Participates in the activation of interferon-gamma signaling by promoting proteasomal degradation of the repressor SOCS1. Plays a positive role in the TNFalpha and IL-1beta signaling pathways. Mechanistically, induces the 'Lys-63'-linked polyubiquitination of MAP3K7/TAK1 component leading to the activation of NF-kappa-B. Also modulates STAT3 activity through negative regulation of PIAS3, either by degradation of PIAS3 through the ubiquitin-proteasome pathway or exclusion of PIAS3 from the nucleus. Negatively regulates TLR3/4-mediated innate immune response by catalyzing 'Lys-6'- and 'Lys-33'-linked polyubiquitination of TICAM1 and thereby disrupting the TICAM1-TBK1 interaction. The sequence is that of E3 ubiquitin-protein ligase TRIM8 (TRIM8) from Homo sapiens (Human).